The sequence spans 650 residues: 1-deoxy-D-xylulose-5-phosphate synthase (650 aa).

A compositionally biased stretch (basic and acidic residues) spans Met-1–His-13. The interval Met-1 to Leu-23 is disordered. Thiamine diphosphate is bound by residues His-92 and Ala-133 to Ser-135. Position 164 (Asp-164) interacts with Mg(2+). Thiamine diphosphate is bound by residues Gly-165 to Ala-166, Asn-193, Tyr-302, and Glu-384. Residue Asn-193 coordinates Mg(2+).

Belongs to the transketolase family. DXPS subfamily. Homodimer. The cofactor is Mg(2+). Thiamine diphosphate serves as cofactor.

The catalysed reaction is D-glyceraldehyde 3-phosphate + pyruvate + H(+) = 1-deoxy-D-xylulose 5-phosphate + CO2. The protein operates within metabolic intermediate biosynthesis; 1-deoxy-D-xylulose 5-phosphate biosynthesis; 1-deoxy-D-xylulose 5-phosphate from D-glyceraldehyde 3-phosphate and pyruvate: step 1/1. Catalyzes the acyloin condensation reaction between C atoms 2 and 3 of pyruvate and glyceraldehyde 3-phosphate to yield 1-deoxy-D-xylulose-5-phosphate (DXP). The sequence is that of 1-deoxy-D-xylulose-5-phosphate synthase from Chelativorans sp. (strain BNC1).